The primary structure comprises 614 residues: Probable ATP-dependent RNA helicase DDX5 (614 aa).

A compositionally biased stretch (basic and acidic residues) spans 1–15 (MSSYSSDRDRGRDRG). Positions 1 to 39 (MSSYSSDRDRGRDRGFGAPRFGGSRTGPLSGKKFGNPGE) are disordered. Ser-24 bears the Phosphoserine mark. N6-acetyllysine; alternate is present on Lys-32. Lys-32 participates in a covalent cross-link: Glycyl lysine isopeptide (Lys-Gly) (interchain with G-Cter in SUMO2); alternate. N6-acetyllysine is present on residues Lys-33 and Lys-40. Lys-45 participates in a covalent cross-link: Glycyl lysine isopeptide (Lys-Gly) (interchain with G-Cter in SUMO2). Residue Lys-53 forms a Glycyl lysine isopeptide (Lys-Gly) (interchain with G-Cter in SUMO2); alternate linkage. Lys-53 is covalently cross-linked (Glycyl lysine isopeptide (Lys-Gly) (interchain with G-Cter in SUMO); alternate). A Glycyl lysine isopeptide (Lys-Gly) (interchain with G-Cter in SUMO1); alternate cross-link involves residue Lys-53. Positions 94–122 (LNFYEANFPANVMDVIARQNFTEPTAIQA) match the Q motif motif. ATP-binding positions include 114 to 116 (FTE), Gln-121, and 138 to 145 (AQTGSGKT). The 176-residue stretch at 125 to 300 (WPVALSGLDM…EDFLKDYIHI (176 aa)) folds into the Helicase ATP-binding domain. Lys-236 is modified (N6-acetyllysine). The short motif at 248 to 251 (DEAD) is the DEAD box element. Phosphotyrosine is present on Tyr-297. The 148-residue stretch at 328–475 (KLIRLMEEIM…AINPKLLQLV (148 aa)) folds into the Helicase C-terminal domain. Residues Lys-340, Lys-343, Lys-388, Lys-391, Lys-411, Lys-437, Lys-451, and Lys-470 each participate in a glycyl lysine isopeptide (Lys-Gly) (interchain with G-Cter in SUMO2) cross-link. The segment at 477 to 504 (DRGSGRSRGRGGMKDDRRDRYSAGKRGG) is disordered. Residues 477–614 (DRGSGRSRGR…GYPMPTGYSQ (138 aa)) form a transactivation domain region. The residue at position 480 (Ser-480) is a Phosphoserine. Residues 488 to 498 (GMKDDRRDRYS) show a composition bias toward basic and acidic residues. A Glycyl lysine isopeptide (Lys-Gly) (interchain with G-Cter in SUMO2) cross-link involves residue Lys-523.

Belongs to the DEAD box helicase family. DDX5/DBP2 subfamily. In terms of assembly, identified in the spliceosome C complex. Component of a ribonucleoprotein complex containing mRNAs and RNA-binding proteins including DDX5, HNRNPH2 and SRSF1 as well as splicing regulator ARVCF. Interacts with RBM4; the interaction occurs in an RNA-independent manner. Interacts with AGO1 and AGO2. Interacts with ESR1, AR, EP300, CREBBP, POLR2A, TP53, RUNX2 and HDAC1. Self-associates. Interacts with DDX17. Interacts with BRDT. The large PER complex involved in the repression of transcriptional termination is composed of at least PER2, CDK9, DDX5, DHX9, NCBP1 and POLR2A (active). Interacts with DHX36; this interaction occurs in a RNA-dependent manner. Interacts with NUPR1. Interacts with ERCC6. Interacts with DDX3X in the cytoplasm; this interaction may be more efficient when both proteins are unphosphorylated. Sumoylated; sumoylation, promoted by PIAS1, promotes interaction with HDAC1 and transcriptional repression activity. Sumoylation also significantly increases stability, and reduces polyubiquitination. In terms of processing, polyubiquitinated, leading to proteasomal degradation. Post-translationally, weakly phosphorylated in the G1/S phase of the cell cycle and much more at G2/M, especially at Thr and Tyr residues.

The protein resides in the nucleus. Its subcellular location is the nucleolus. It is found in the cytoplasm. The catalysed reaction is ATP + H2O = ADP + phosphate + H(+). Involved in the alternative regulation of pre-mRNA splicing; its RNA helicase activity is necessary for increasing tau exon 10 inclusion and occurs in a RBM4-dependent manner. Binds to the tau pre-mRNA in the stem-loop region downstream of exon 10. The rate of ATP hydrolysis is highly stimulated by single-stranded RNA. Involved in transcriptional regulation; the function is independent of the RNA helicase activity. Transcriptional coactivator for androgen receptor AR but probably not ESR1. Synergizes with DDX17 and SRA1 RNA to activate MYOD1 transcriptional activity and involved in skeletal muscle differentiation. Transcriptional coactivator for p53/TP53 and involved in p53/TP53 transcriptional response to DNA damage and p53/TP53-dependent apoptosis. Transcriptional coactivator for RUNX2 and involved in regulation of osteoblast differentiation. Acts as a transcriptional repressor in a promoter-specific manner; the function probably involves association with histone deacetylases, such as HDAC1. As component of a large PER complex is involved in the inhibition of 3' transcriptional termination of circadian target genes such as PER1 and NR1D1 and the control of the circadian rhythms. In Mus musculus (Mouse), this protein is Probable ATP-dependent RNA helicase DDX5 (Ddx5).